A 317-amino-acid polypeptide reads, in one-letter code: MQPRLGGPALLLLPPLLLLLLLGAGGGDCGARAEVLFRCPPCTPESLAACKPPPGAAAGPAGDARVPCELVREPGCGCCSVCARLEGERCGVYTPRCGQGLRCYPNPGSELPLRALVHGEGTCEKHGDAEYSASPEQVADNGEEHSEGGQVENHVDGNVNLMGGGGGAGRKPLKFRMKELAVFREKVTEQHRQMGKGGKHHLGLEEPKKLRPPPARTPCQQELDQVLERISTMRLPDERGPLEHLYSLHIPNCDKHGLYNLKQCKMSLNGQRGECWCVNPNTGKLIQGAPTIRGDPECHLFYNEQQGARGVHTQRMQ.

An N-terminal signal peptide occupies residues 1-33 (MQPRLGGPALLLLPPLLLLLLLGAGGGDCGARA). Residues 35–126 (VLFRCPPCTP…VHGEGTCEKH (92 aa)) enclose the IGFBP N-terminal domain. Cystine bridges form between C39/C76, C42/C78, C50/C79, C68/C82, C90/C103, and C97/C123. Disordered stretches follow at residues 125 to 151 (KHGDAEYSASPEQVADNGEEHSEGGQV) and 189 to 218 (EQHRQMGKGGKHHLGLEEPKKLRPPPARTP). The region spanning 216 to 298 (RTPCQQELDQ…APTIRGDPEC (83 aa)) is the Thyroglobulin type-1 domain. Intrachain disulfides connect C219/C253, C264/C275, and C277/C298. The short motif at 293–295 (RGD) is the Cell attachment site element.

In terms of assembly, interacts with IGF1. Interacts with IGF2. Interacts (via RGD motif) with integrin alpha5/ITGA5; this interaction induces cell migration, adhesion or apoptosis according to the context. Interacts with PTPRB; this interaction leads to PTPRB dimerization and inactivation. Cleaved by MMP9 leading to release of free IGF2 from IGFBP2-IGF2 complex, which contributes to enhance the motility and the growth of astrocytes. Post-translationally, O-glycosylated. Expressed in abundance in selected adult tissues, namely liver, kidney, adrenal, pituitary and choroid plexus.

It is found in the secreted. Its function is as follows. Multifunctional protein that plays a critical role in regulating the availability of IGFs such as IGF1 and IGF2 to their receptors and thereby regulates IGF-mediated cellular processes including proliferation, differentiation, and apoptosis in a cell-type specific manner. Functions coordinately with receptor protein tyrosine phosphatase beta/PTPRB and the IGF1 receptor to regulate IGF1-mediated signaling by stimulating the phosphorylation of PTEN leading to its inactivation and AKT1 activation. Plays a positive role in cell migration via interaction with integrin alpha5/ITGA5 through an RGD motif. Additionally, interaction with ITGA5/ITGB1 enhances the adhesion of endothelial progenitor cells to endothelial cells. Upon mitochondrial damage, facilitates apoptosis with ITGA5 of podocytes, and then activates the phosphorylation of focal adhesion kinase (FAK)-mediated mitochondrial injury. This Ovis aries (Sheep) protein is Insulin-like growth factor-binding protein 2 (IGFBP2).